Reading from the N-terminus, the 307-residue chain is Elongation factor Ts (307 aa).

Residues 79-82 form an involved in Mg(2+) ion dislocation from EF-Tu region; sequence TDFV.

Belongs to the EF-Ts family.

Its subcellular location is the cytoplasm. Functionally, associates with the EF-Tu.GDP complex and induces the exchange of GDP to GTP. It remains bound to the aminoacyl-tRNA.EF-Tu.GTP complex up to the GTP hydrolysis stage on the ribosome. The sequence is that of Elongation factor Ts from Sinorhizobium fredii (strain NBRC 101917 / NGR234).